Consider the following 692-residue polypeptide: Elongation factor G (692 aa).

In terms of domain architecture, tr-type G spans 8 to 282; that stretch reads ENTRNIGIMA…AVIDYLPSPL (275 aa). Residues 17–24, 81–85, and 135–138 each bind GTP; these read AHIDAGKT, DTPGH, and NKMD.

Belongs to the TRAFAC class translation factor GTPase superfamily. Classic translation factor GTPase family. EF-G/EF-2 subfamily.

It localises to the cytoplasm. In terms of biological role, catalyzes the GTP-dependent ribosomal translocation step during translation elongation. During this step, the ribosome changes from the pre-translocational (PRE) to the post-translocational (POST) state as the newly formed A-site-bound peptidyl-tRNA and P-site-bound deacylated tRNA move to the P and E sites, respectively. Catalyzes the coordinated movement of the two tRNA molecules, the mRNA and conformational changes in the ribosome. This Bacillus cereus (strain ATCC 14579 / DSM 31 / CCUG 7414 / JCM 2152 / NBRC 15305 / NCIMB 9373 / NCTC 2599 / NRRL B-3711) protein is Elongation factor G.